Here is a 153-residue protein sequence, read N- to C-terminus: Ribonuclease H (153 aa).

One can recognise an RNase H type-1 domain in the interval 4–145; sequence SVDSVELFTD…ADQLANRGVD (142 aa). Residues aspartate 13, glutamate 51, aspartate 73, and aspartate 137 each coordinate Mg(2+).

It belongs to the RNase H family. Monomer. Mg(2+) serves as cofactor.

The protein resides in the cytoplasm. It carries out the reaction Endonucleolytic cleavage to 5'-phosphomonoester.. Its function is as follows. Endonuclease that specifically degrades the RNA of RNA-DNA hybrids. This chain is Ribonuclease H, found in Pseudomonas fluorescens (strain Pf0-1).